Consider the following 486-residue polypeptide: NADH-quinone oxidoreductase subunit N (486 aa).

14 helical membrane passes run 8–28, 36–56, 74–94, 104–124, 125–145, 160–180, 201–221, 239–259, 269–289, 298–318, 329–349, 376–396, 410–432, and 459–479; these read LTALLPLLIIMLTVITVILSI, FVAVFSILGLIFALCSLYFLI, ILYIGMILISSICTCIFSYPW, EFYLLVIISTLGAISLTISHH, MASFFINIELISLPMFGLIAY, IILSGVSSSFLLFGIAWVYSI, ILVVLFGISMILLSLFFKLSI, VLSFFSTAGKISVFSVLLNFL, VIYFILSLIIILSILVGNLMA, FLGYTSISQIGYLLIVLLVSH, AIYLCGYLFSNIACLGIVNLI, SVLTLVLISSAGIPMTLGFIG, WLIGFAFLIGSLLGLYCYLRIIL, and IVICISGIILLALGIYPNPLI.

Belongs to the complex I subunit 2 family. As to quaternary structure, NDH-1 is composed of 13 different subunits. Subunits NuoA, H, J, K, L, M, N constitute the membrane sector of the complex.

It is found in the cell membrane. The enzyme catalyses a quinone + NADH + 5 H(+)(in) = a quinol + NAD(+) + 4 H(+)(out). Its function is as follows. NDH-1 shuttles electrons from NADH, via FMN and iron-sulfur (Fe-S) centers, to quinones in the respiratory chain. The immediate electron acceptor for the enzyme in this species is believed to be ubiquinone. Couples the redox reaction to proton translocation (for every two electrons transferred, four hydrogen ions are translocated across the cytoplasmic membrane), and thus conserves the redox energy in a proton gradient. The chain is NADH-quinone oxidoreductase subunit N from Buchnera aphidicola subsp. Acyrthosiphon pisum (strain APS) (Acyrthosiphon pisum symbiotic bacterium).